The chain runs to 536 residues: MAAGSGVAPPPLGVGLCAVKVEEDSPGSQEPSGSGDWQNPETSRKQFRQLRYQEVAGPEEALSRLWELCRRWLRPELRSKEQIMELLVLEQFLTILPRELQAYVRDHCPESGEEAAALARTLQRALDGASLQSFATFKDVAESLTWEEWEQLAAARKGFCRESTKDPGSTVGPGLETKAVTTDVILKQEMSKEAESQAWLQEVSQGKVPVFTKCGDTWEDWEERLPKAAELLPLQSSPEEQGRTAIPHLLGVSKDESDSKDNEFENSGSLVLGQHIQTAEGLVTNGECGEDHKQGLHAKCHTVKPHSSVDNALGLLESQRHFQEGRPYKCDNCEKRFRQRSDLFKHQRTHTGEKPYQCQECGKSFSQSAALVKHQRTHTGEKPYACPECGECFRQSSHLSRHQRTHGSEKYCKCEECGEIFHISSLFKHQRLHKGERPHKCEVCEKSFKQRSDLFKHQRIHTGEKPYMCFVCERRFSQSATLIKHQRTHTGEKPYKCFQCGERFRQSTHLVRHQRIHHNSVSGLRVEKQHGNLLSW.

Positions A18–K45 are disordered. K20 is covalently cross-linked (Glycyl lysine isopeptide (Lys-Gly) (interchain with G-Cter in SUMO2)). Positions P26–E41 are enriched in polar residues. One can recognise an SCAN box domain in the interval R44–L126. Positions A135–S196 constitute a KRAB domain. Residues K207 and K260 each participate in a glycyl lysine isopeptide (Lys-Gly) (interchain with G-Cter in SUMO2) cross-link. C2H2-type zinc fingers lie at residues Y328–H350, Y356–H378, and Y384–H406. The C2H2-type 4; atypical zinc finger occupies C412 to H433. K413 participates in a covalent cross-link: Glycyl lysine isopeptide (Lys-Gly) (interchain with G-Cter in SUMO2). 3 C2H2-type zinc fingers span residues H439–H461, Y467–H489, and Y495–H517.

Belongs to the krueppel C2H2-type zinc-finger protein family.

Its subcellular location is the nucleus. May be involved in transcriptional regulation. This is Zinc finger protein 394 (Znf394) from Rattus norvegicus (Rat).